Here is a 173-residue protein sequence, read N- to C-terminus: Glycine cleavage system H protein, mitochondrial (173 aa).

The transit peptide at 1–48 (MALRVVRSVRALLCTLRAVPSPAAPCPPRPWQLGVGAVRTLRTGPALL) directs the protein to the mitochondrion. The Lipoyl-binding domain occupies 66–148 (IGTVGISNFA…YEDGWLIKMT (83 aa)). Residue Lys-107 is modified to N6-lipoyllysine.

This sequence belongs to the GcvH family. Interacts with GLDC. The glycine cleavage system is composed of four proteins: P (GLDC), T (GCST), L (DLD) and H (GCSH). (R)-lipoate serves as cofactor.

The protein resides in the mitochondrion. The glycine cleavage system catalyzes the degradation of glycine. The H protein (GCSH) shuttles the methylamine group of glycine from the P protein (GLDC) to the T protein (GCST). Has a pivotal role in the lipoylation of enzymes involved in cellular energetics such as the mitochondrial dihydrolipoyllysine-residue acetyltransferase component of pyruvate dehydrogenase complex (DLAT), and the mitochondrial dihydrolipoyllysine-residue succinyltransferase component of 2-oxoglutarate dehydrogenase complex (DLST). The polypeptide is Glycine cleavage system H protein, mitochondrial (Homo sapiens (Human)).